The following is a 687-amino-acid chain: DNA-directed RNA polymerase subunit beta' (687 aa).

Positions 69, 71, 87, and 90 each coordinate Zn(2+). Asp-495, Asp-497, and Asp-499 together coordinate Mg(2+).

This sequence belongs to the RNA polymerase beta' chain family. RpoC1 subfamily. As to quaternary structure, in plastids the minimal PEP RNA polymerase catalytic core is composed of four subunits: alpha, beta, beta', and beta''. When a (nuclear-encoded) sigma factor is associated with the core the holoenzyme is formed, which can initiate transcription. Mg(2+) is required as a cofactor. It depends on Zn(2+) as a cofactor.

It localises to the plastid. Its subcellular location is the chloroplast. The catalysed reaction is RNA(n) + a ribonucleoside 5'-triphosphate = RNA(n+1) + diphosphate. Functionally, DNA-dependent RNA polymerase catalyzes the transcription of DNA into RNA using the four ribonucleoside triphosphates as substrates. The polypeptide is DNA-directed RNA polymerase subunit beta' (Solanum tuberosum (Potato)).